The chain runs to 739 residues: Ent-kaurene synthase-like 3 (739 aa).

Mg(2+) is bound by residues Asp-475, Asp-479, Asn-619, Thr-623, and Glu-627. Positions 475 to 479 match the DDXXD motif motif; it reads DDFFD.

It belongs to the terpene synthase family. It depends on Mg(2+) as a cofactor. In terms of tissue distribution, expressed in roots and stems.

The chain is Ent-kaurene synthase-like 3 (KSL3) from Oryza sativa subsp. japonica (Rice).